A 95-amino-acid polypeptide reads, in one-letter code: Oxytetracycline polyketide synthase acyl carrier protein (95 aa).

The region spanning 3–81 is the Carrier domain; the sequence is LLTLSDLLTL…ALIEMTNASL (79 aa). Position 41 is an O-(pantetheine 4'-phosphoryl)serine (Ser-41).

4'-phosphopantetheine is transferred from CoA to a specific serine of the apo-ACP-like protein.

It functions in the pathway antibiotic biosynthesis; oxytetracycline biosynthesis. In terms of biological role, acyl carrier protein. The protein is Oxytetracycline polyketide synthase acyl carrier protein of Streptomyces rimosus.